Consider the following 61-residue polypeptide: Large ribosomal subunit protein bL32 (61 aa).

A compositionally biased stretch (basic residues) spans 1–10 (MAQPKKKTSN). The interval 1–23 (MAQPKKKTSNAKRDQRRATWKRK) is disordered.

This sequence belongs to the bacterial ribosomal protein bL32 family.

The protein is Large ribosomal subunit protein bL32 of Gloeobacter violaceus (strain ATCC 29082 / PCC 7421).